Reading from the N-terminus, the 327-residue chain is tRNA N6-adenosine threonylcarbamoyltransferase (327 aa).

Histidine 109 and histidine 113 together coordinate Fe cation. Residues 132–136 (MVSGG), aspartate 165, glycine 178, aspartate 182, and asparagine 268 contribute to the substrate site. Residue aspartate 296 coordinates Fe cation.

Belongs to the KAE1 / TsaD family. It depends on Fe(2+) as a cofactor.

The protein localises to the cytoplasm. The enzyme catalyses L-threonylcarbamoyladenylate + adenosine(37) in tRNA = N(6)-L-threonylcarbamoyladenosine(37) in tRNA + AMP + H(+). In terms of biological role, required for the formation of a threonylcarbamoyl group on adenosine at position 37 (t(6)A37) in tRNAs that read codons beginning with adenine. Is involved in the transfer of the threonylcarbamoyl moiety of threonylcarbamoyl-AMP (TC-AMP) to the N6 group of A37, together with TsaE and TsaB. TsaD likely plays a direct catalytic role in this reaction. This is tRNA N6-adenosine threonylcarbamoyltransferase from Thermotoga petrophila (strain ATCC BAA-488 / DSM 13995 / JCM 10881 / RKU-1).